The following is a 488-amino-acid chain: Pup--protein ligase (488 aa).

Residue glutamate 34 participates in Mg(2+) binding. ATP is bound at residue arginine 77. Tyrosine 79 provides a ligand contact to Mg(2+). Aspartate 81 (proton acceptor) is an active-site residue. Glutamate 87 contacts Mg(2+). Residues threonine 90 and tryptophan 453 each contribute to the ATP site.

The protein belongs to the Pup ligase/Pup deamidase family. Pup-conjugating enzyme subfamily.

The catalysed reaction is ATP + [prokaryotic ubiquitin-like protein]-L-glutamate + [protein]-L-lysine = ADP + phosphate + N(6)-([prokaryotic ubiquitin-like protein]-gamma-L-glutamyl)-[protein]-L-lysine.. The protein operates within protein degradation; proteasomal Pup-dependent pathway. It participates in protein modification; protein pupylation. In terms of biological role, catalyzes the covalent attachment of the prokaryotic ubiquitin-like protein modifier Pup to the proteasomal substrate proteins, thereby targeting them for proteasomal degradation. This tagging system is termed pupylation. The ligation reaction involves the side-chain carboxylate of the C-terminal glutamate of Pup and the side-chain amino group of a substrate lysine. In Bifidobacterium dentium (strain ATCC 27534 / DSM 20436 / JCM 1195 / Bd1), this protein is Pup--protein ligase.